We begin with the raw amino-acid sequence, 2130 residues long: Highly reducing polyketide synthase anuA (2130 aa).

Positions 1-213 (MKAGVLSGTS…GANCHVILEQ (213 aa)) constitute a Ketosynthase family 3 (KS3) domain. A Malonyl-CoA:ACP transacylase (MAT) domain is found at 317–644 (FVFTGQGSQW…SFAGNLWLKG (328 aa)). Positions 701–836 (HELLGSLLTG…GSIAIHPRNA (136 aa)) are N-terminal hotdog fold. Positions 701-1000 (HELLGSLLTG…LSPYQSTSQA (300 aa)) constitute a PKS/mFAS DH domain. Catalysis depends on His-733, which acts as the Proton acceptor; for dehydratase activity. A C-terminal hotdog fold region spans residues 849–1000 (LESTAKRTWY…LSPYQSTSQA (152 aa)). Catalysis depends on Asp-914, which acts as the Proton donor; for dehydratase activity. The region spanning 1405-1722 (GQLDTIYFQQ…SRSRIGKVAI (318 aa)) is the Enoyl reductase (ER) domain. A Ketoreductase (KR) domain is found at 1747 to 1927 (SYVMVGCLGG…AVAVGLGMIS (181 aa)). The Carrier domain occupies 2047–2125 (TLDEAVLDHI…SLRDLAMTSL (79 aa)). Residue Ser-2084 is modified to O-(pantetheine 4'-phosphoryl)serine.

It depends on pantetheine 4'-phosphate as a cofactor.

It functions in the pathway secondary metabolite biosynthesis. Highly reducing polyketide synthase; part of the gene cluster that mediates the biosynthesis of annullatin D, an alkylated aromatic polyketide with a fused dihydrobenzofuran lactone ring system that exhibits potent agonistic activities toward the cannabinoid receptors. The annullatin backbone 2-hydroxymethyl-3-pentylphenol is assembled from one acetyl-CoA starter unit and 5 malonyl-CoA elongation units by cooperation of the highly reducing polyketide synthase anuA, the short-chain dehydrogenase anuB and the oxidoreductase anuC, before being hydroxylated at the C-5 alkyl chain by the cytochrome P450 monooxygenase anuE to form (8S)-annullatin E. The prenyltransferase anuH subsequently installs one isoprenyl group at the benzene ring to form (8S)-annullatin J. Enzymatic or nonenzymatic dihydro-benzofuran ring formation between the prenyl and the phenolic hydroxyl groups in (8S)-annullatin J results in two diastereomers (2S,9S)-annullatin H and compound 12. The intermediate (2S,9S)-annullatin H is then converted to (2S,9S)-annullatin D by the FAD-linked oxidoreductase anuG-catalyzed five-member lactone ring formation. The isomer 12 acts as a substrate for the short-chain dehydrogenase anuF and is oxidized to (2R)-annullatin F, which is subsequently acetylated by an acetyltransferase leading to (2R)-annullatin G formation. The remaining enzymes identified within the cluster, anuD, anuI and anuJ, seem not to be involved in annullatin biosynthesis. This is Highly reducing polyketide synthase anuA from Penicillium roqueforti (strain FM164).